A 241-amino-acid polypeptide reads, in one-letter code: 3-dehydroquinate dehydratase (241 aa).

Residues 35 to 37 and R70 contribute to the 3-dehydroquinate site; that span reads ELR. H132 serves as the catalytic Proton donor/acceptor. Catalysis depends on K159, which acts as the Schiff-base intermediate with substrate. Residues R201 and Q224 each coordinate 3-dehydroquinate.

Belongs to the type-I 3-dehydroquinase family. In terms of assembly, homodimer.

It catalyses the reaction 3-dehydroquinate = 3-dehydroshikimate + H2O. The protein operates within metabolic intermediate biosynthesis; chorismate biosynthesis; chorismate from D-erythrose 4-phosphate and phosphoenolpyruvate: step 3/7. Involved in the third step of the chorismate pathway, which leads to the biosynthesis of aromatic amino acids. Catalyzes the cis-dehydration of 3-dehydroquinate (DHQ) and introduces the first double bond of the aromatic ring to yield 3-dehydroshikimate. The sequence is that of 3-dehydroquinate dehydratase from Staphylococcus carnosus (strain TM300).